The chain runs to 265 residues: 6-oxopurine nucleoside phosphorylase (265 aa).

Phosphate-binding positions include Ser-10, 49–50, and 82–83; these read RH and SA. 2 disulfide bridges follow: Cys-136-Cys-202 and Cys-162-Cys-190. Met-187 contacts substrate. Thr-188 lines the phosphate pocket. Position 211-213 (211-213) interacts with substrate; it reads NYA. An intrachain disulfide couples Cys-254 to Cys-256.

Belongs to the PNP/MTAP phosphorylase family. MTAP subfamily. Homohexamer. Dimer of a homotrimer.

It carries out the reaction a purine D-ribonucleoside + phosphate = a purine nucleobase + alpha-D-ribose 1-phosphate. The catalysed reaction is guanosine + phosphate = alpha-D-ribose 1-phosphate + guanine. It catalyses the reaction inosine + phosphate = alpha-D-ribose 1-phosphate + hypoxanthine. Its pathway is purine metabolism; purine nucleoside salvage. Purine nucleoside phosphorylase which is highly specific for 6-oxopurine nucleosides. Cleaves guanosine or inosine to respective bases and sugar-1-phosphate molecules. Involved in purine salvage. This Pyrococcus furiosus (strain ATCC 43587 / DSM 3638 / JCM 8422 / Vc1) protein is 6-oxopurine nucleoside phosphorylase.